The sequence spans 824 residues: Lysine-specific histone demethylase 1B homolog (824 aa).

Positions 1 to 31 are disordered; it reads MTTELEIDDRKEEEAQIPGETSESEEGDEPV. The SWIRM domain maps to 245-346; the sequence is PFTDVIANIV…YGAFDFRIDP (102 aa). Residues 352–407, valine 579, glutamate 788, and 796–798 contribute to the FAD site; these read PKIA…AQII and QTM.

It belongs to the flavin monoamine oxidase family. FAD serves as cofactor. In hermaphrodites, expressed in gut cells, embryonic cells and sheath cells. Not expressed in sperm or pharyngeal neurons.

It is found in the nucleus. The enzyme catalyses N(6),N(6)-dimethyl-L-lysyl(4)-[histone H3] + 2 A + 2 H2O = L-lysyl(4)-[histone H3] + 2 formaldehyde + 2 AH2. Its function is as follows. Histone demethylase that demethylates di-methylated 'Lys-4' of histone H3, a specific tag for epigenetic transcriptional activation, thereby acting as a corepressor. Acts by oxidizing the substrate by FAD to generate the corresponding imine that is subsequently hydrolyzed. Plays a role in the mitotic development of the germline. May be involved in H3 demethylation in mitotic cells including gut and embryonic cells. Plays a role in sensitivity upon interstrand cross-link DNA damage, probably by positively regulating the expression of mlh-1. Plays a role in developmental growth and lifespan regulation in response to ultraviolet-induced damage. No obvious role in larval development, sex chromosome segregation or for regulating meiotic crossover frequency. This is Lysine-specific histone demethylase 1B homolog from Caenorhabditis elegans.